Consider the following 470-residue polypeptide: Aminoacyl transferase sphA (470 aa).

Pyridoxal 5'-phosphate-binding residues include Ser-212, His-244, and Thr-272. Lys-275 is subject to N6-(pyridoxal phosphate)lysine.

It belongs to the class-II pyridoxal-phosphate-dependent aminotransferase family. BioF subfamily. Homodimer. Pyridoxal 5'-phosphate is required as a cofactor.

The enzyme catalyses aminomalonate + (3R)-hydroxyoctadeca-4,10-dienoyl-[ACP] = 3-oxopresphingofungin + holo-[ACP] + CO2. It functions in the pathway secondary metabolite biosynthesis. Aminoacyl transferase; part of the gene cluster that mediates the biosynthesis of sphingofungins, bioactive molecules acting as sphingolipid inhibitors via inhibiting serine palmitoyl transferase (SPT). Within the pathway, sphA transfers aminomalonate onto the sphB product 3-hydroxyoctadeca-4,10-dienoyl-ACP to produce 3-keto-presphingofungin. The substrate specificity of sphA using only aminomalonate in Aspergillus fumigatus is responsible for the biosynthesis of sphingofungins B and C but not E and F like in Byssochlamys spectabilis. The PKS sphB does not contain any putative thioesterase domain for releasing the nascent polyketide chain and it has been suggested that aminoacyl transferases can facilitate the polyketide chain release. Sphingofungin biosynthesis starts with the PKS sphB that produces an C18 polyketide precursor 3-hydroxyoctadeca-4,10-dienoyl-ACP containing one delta-6 desaturation and one delta-12 desaturation. The aminoacyl transferase sphA uses the sphB product to produce 3-keto-presphingofungin by adding an aminomalonate molecule. SphF then reduces the C-3 ketone of 3-keto-presphingofungin which leads to presphingofungin. The cytochrome P450 monooxygenase sphH converts presphingofungin into sphingofungin B1 which is further converted to sphingofungin B by the dioxygenase sphC. SphC is also able to convert presphingofungin into sphingofungin B2. The acetyltransferase sphE acetylates sphingofungin B to produce sphingofungin C, but can also convert sphingofungin B1 into sphingofungin C1 and sphingofungin B2 into sphingofungin C2. Finally, sphingofungin C can be spontaneously converted into sphingofungin D. This Aspergillus fumigatus (strain CBS 144.89 / FGSC A1163 / CEA10) (Neosartorya fumigata) protein is Aminoacyl transferase sphA.